Consider the following 779-residue polypeptide: Serine/threonine-protein kinase SIK1 (779 aa).

The Protein kinase domain occupies 27 to 278; sequence YDVERTLGKG…IAQIRQHRWM (252 aa). Residues 33–41 and K56 each bind ATP; that span reads LGKGNFAVV. D149 acts as the Proton acceptor in catalysis. Residue T182 is modified to Phosphothreonine; by LKB1 and GSK3-beta. Position 186 is a phosphoserine; by autocatalysis (S186). The region spanning 303–343 is the UBA domain; the sequence is DYNEQVLGIMQALGIDRQRTIESLQNSSYNHFAAIYYLLLE. The residue at position 322 (T322) is a Phosphothreonine; by CaMK1. Disordered stretches follow at residues 350-375 and 449-472; these read SAQP…LSSL and EARQ…STGR. Over residues 363 to 373 the composition is skewed to polar residues; that stretch reads RQPQLRSSDLS. S577 bears the Phosphoserine; by PKA mark. Positions 586–612 are RK-rich region; that stretch reads KAFRQQLRKNARTKGFLGLNKIKGLAR. Residues 621-641 form a disordered region; the sequence is TPRGGMSTFHTPAPSSGLQGC. The span at 628-641 shows a compositional bias: polar residues; the sequence is TFHTPAPSSGLQGC.

Belongs to the protein kinase superfamily. CAMK Ser/Thr protein kinase family. AMPK subfamily. As to quaternary structure, interacts (when phosphorylated on Thr-182 and Ser-186) with YWHAZ. Interacts with ATP1A1. Requires Mg(2+) as cofactor. Phosphorylated at Thr-182 by STK11/LKB1 in complex with STE20-related adapter-alpha (STRADA) pseudo kinase and CAB39, leading to its activation. Phosphorylation at Thr-182 promotes autophosphorylation at Ser-186, which is required for sustained activity. Autophosphorylation at Ser-186 is maintained by sequential phosphorylation at Thr-182 by GSK3-beta. GSK3-beta cannot initiate phosphorylation at Thr-182, it can only maintain it. Phosphorylation at Ser-577 by PKA promotes translocation to the cytoplasm. Phosphorylation at Thr-322 by CaMK1 following intracellular sodium concentration leads to activation. As to expression, expressed in lung, skin, ovary, heart and stomach. No expression in brain, liver or adult skeletal muscle but is present in skeletal muscle progenitor cells of the somite beginning at 9.5 dpc. Present at 8.0 dpc in the monolayer of presumptive myocardial cells but rapidly down-regulated at 8.5 dpc upon primitive ventricle formation, although still present in myocardial cells that will populate the primitive atrium and bulbus cordis. At 9.5 dpc expression is down-regulated in the primitive atrium but observed in the sinus venosus and truncus arteriosus.

The protein resides in the cytoplasm. It localises to the nucleus. It catalyses the reaction L-seryl-[protein] + ATP = O-phospho-L-seryl-[protein] + ADP + H(+). The catalysed reaction is L-threonyl-[protein] + ATP = O-phospho-L-threonyl-[protein] + ADP + H(+). With respect to regulation, activated by phosphorylation on Thr-182. Also activated by phosphorylation on Thr-322 in response to increases in intracellular sodium in parallel with elevations in intracellular calcium through the reversible sodium/calcium exchanger. In terms of biological role, serine/threonine-protein kinase involved in various processes such as cell cycle regulation, gluconeogenesis and lipogenesis regulation, muscle growth and differentiation and tumor suppression. Phosphorylates HDAC4, HDAC5, PPME1, SREBF1, CRTC1/TORC1 and CRTC2/TORC2. Acts as a tumor suppressor and plays a key role in p53/TP53-dependent anoikis, a type of apoptosis triggered by cell detachment: required for phosphorylation of p53/TP53 in response to loss of adhesion and is able to suppress metastasis. Part of a sodium-sensing signaling network, probably by mediating phosphorylation of PPME1: following increases in intracellular sodium, SIK1 is activated by CaMK1 and phosphorylates PPME1 subunit of protein phosphatase 2A (PP2A), leading to dephosphorylation of sodium/potassium-transporting ATPase ATP1A1 and subsequent increase activity of ATP1A1. Acts as a regulator of muscle cells by phosphorylating and inhibiting class II histone deacetylases HDAC4 and HDAC5, leading to promote expression of MEF2 target genes in myocytes. Also required during cardiomyogenesis by regulating the exit of cardiomyoblasts from the cell cycle via down-regulation of CDKN1C/p57Kip2. Acts as a regulator of hepatic gluconeogenesis by phosphorylating and repressing the CREB-specific coactivators CRTC1/TORC1 and CRTC2/TORC2, leading to inhibit CREB activity. Also regulates hepatic lipogenesis by phosphorylating and inhibiting SREBF1. In concert with CRTC1/TORC1, regulates the light-induced entrainment of the circadian clock by attenuating PER1 induction; represses CREB-mediated transcription of PER1 by phosphorylating and deactivating CRTC1/TORC1. This is Serine/threonine-protein kinase SIK1 (Sik1) from Mus musculus (Mouse).